The sequence spans 717 residues: Fatty acid oxidation complex subunit alpha (717 aa).

Positions 1–189 (MIYQSPTIEV…KVGAIDAVVA (189 aa)) are enoyl-CoA hydratase/isomerase. Asp-296 is a binding site for substrate. The 3-hydroxyacyl-CoA dehydrogenase stretch occupies residues 311–717 (KKVNSAAVLG…ANNGSYYQQA (407 aa)). NAD(+) is bound by residues Met-324, Asp-343, 400–402 (VVE), Lys-407, and Ser-429. Catalysis depends on His-450, which acts as the For 3-hydroxyacyl-CoA dehydrogenase activity. Asn-453 contacts NAD(+). Positions 500 and 660 each coordinate substrate.

It in the N-terminal section; belongs to the enoyl-CoA hydratase/isomerase family. The protein in the C-terminal section; belongs to the 3-hydroxyacyl-CoA dehydrogenase family. Heterotetramer of two alpha chains (FadB) and two beta chains (FadA).

The enzyme catalyses a (3S)-3-hydroxyacyl-CoA + NAD(+) = a 3-oxoacyl-CoA + NADH + H(+). It catalyses the reaction a (3S)-3-hydroxyacyl-CoA = a (2E)-enoyl-CoA + H2O. The catalysed reaction is a 4-saturated-(3S)-3-hydroxyacyl-CoA = a (3E)-enoyl-CoA + H2O. It carries out the reaction (3S)-3-hydroxybutanoyl-CoA = (3R)-3-hydroxybutanoyl-CoA. The enzyme catalyses a (3Z)-enoyl-CoA = a 4-saturated (2E)-enoyl-CoA. It catalyses the reaction a (3E)-enoyl-CoA = a 4-saturated (2E)-enoyl-CoA. The protein operates within lipid metabolism; fatty acid beta-oxidation. Functionally, involved in the aerobic and anaerobic degradation of long-chain fatty acids via beta-oxidation cycle. Catalyzes the formation of 3-oxoacyl-CoA from enoyl-CoA via L-3-hydroxyacyl-CoA. It can also use D-3-hydroxyacyl-CoA and cis-3-enoyl-CoA as substrate. The sequence is that of Fatty acid oxidation complex subunit alpha from Shewanella halifaxensis (strain HAW-EB4).